The following is a 246-amino-acid chain: UDP-2,3-diacylglucosamine hydrolase (246 aa).

Mn(2+) contacts are provided by Asp8, His10, Asp41, Asn79, and His114. 79-80 is a substrate binding site; it reads NR. 5 residues coordinate substrate: Asp122, Ser160, Asn164, Lys167, and His195. 2 residues coordinate Mn(2+): His195 and His197.

This sequence belongs to the LpxH family. Requires Mn(2+) as cofactor.

The protein resides in the cell inner membrane. It catalyses the reaction UDP-2-N,3-O-bis[(3R)-3-hydroxytetradecanoyl]-alpha-D-glucosamine + H2O = 2-N,3-O-bis[(3R)-3-hydroxytetradecanoyl]-alpha-D-glucosaminyl 1-phosphate + UMP + 2 H(+). It participates in glycolipid biosynthesis; lipid IV(A) biosynthesis; lipid IV(A) from (3R)-3-hydroxytetradecanoyl-[acyl-carrier-protein] and UDP-N-acetyl-alpha-D-glucosamine: step 4/6. Its function is as follows. Hydrolyzes the pyrophosphate bond of UDP-2,3-diacylglucosamine to yield 2,3-diacylglucosamine 1-phosphate (lipid X) and UMP by catalyzing the attack of water at the alpha-P atom. Involved in the biosynthesis of lipid A, a phosphorylated glycolipid that anchors the lipopolysaccharide to the outer membrane of the cell. This Chromohalobacter salexigens (strain ATCC BAA-138 / DSM 3043 / CIP 106854 / NCIMB 13768 / 1H11) protein is UDP-2,3-diacylglucosamine hydrolase.